Reading from the N-terminus, the 76-residue chain is U-actitoxin-Avd8c (76 aa).

The N-terminal stretch at 1–16 is a signal peptide; sequence LVIVFVVLLGVPLISA. A propeptide spanning residues 17 to 33 is cleaved from the precursor; the sequence is NEEELLAILQDQRNDAR.

Belongs to the sea anemone 8 toxin family.

It localises to the secreted. The protein resides in the nematocyst. The chain is U-actitoxin-Avd8c from Anemonia viridis (Snakelocks anemone).